Reading from the N-terminus, the 402-residue chain is Phosphoglycerate kinase (402 aa).

Residues 24-26, Arg-40, 63-66, Arg-122, and Arg-155 each bind substrate; these read DFN and HFGR. Residues Lys-206, Gly-297, Glu-328, and 358 to 361 each bind ATP; that span reads GGDS.

The protein belongs to the phosphoglycerate kinase family. Monomer.

It localises to the cytoplasm. It catalyses the reaction (2R)-3-phosphoglycerate + ATP = (2R)-3-phospho-glyceroyl phosphate + ADP. It functions in the pathway carbohydrate degradation; glycolysis; pyruvate from D-glyceraldehyde 3-phosphate: step 2/5. This Prochlorococcus marinus (strain MIT 9301) protein is Phosphoglycerate kinase.